Reading from the N-terminus, the 460-residue chain is Argininosuccinate lyase (460 aa).

It belongs to the lyase 1 family. Argininosuccinate lyase subfamily.

Its subcellular location is the cytoplasm. The catalysed reaction is 2-(N(omega)-L-arginino)succinate = fumarate + L-arginine. The protein operates within amino-acid biosynthesis; L-arginine biosynthesis; L-arginine from L-ornithine and carbamoyl phosphate: step 3/3. This chain is Argininosuccinate lyase, found in Edwardsiella ictaluri (strain 93-146).